A 569-amino-acid chain; its full sequence is F-box-like/WD repeat-containing protein TBL1X (569 aa).

A LisH domain is found at 55-87 (TSDEVNFLVYRYLQESGFSHSAFTFGIESHISQ). One can recognise an F-box-like domain in the interval 92-137 (GTLVPPAALISILQKGLQYVEAEISINEDGTVFDGRPIESLSLIDA). An N6-acetyllysine modification is found at K153. Residues 170–195 (TSASVSQQNPSKNREATVNGEENRAH) form a disordered region. Position 175 is a phosphoserine (S175). WD repeat units lie at residues 222–261 (GHES…NGGS), 278–317 (PSNK…ASTL), 319–358 (QHKG…AKQQ), 361–401 (FHSA…KTFQ), 402–441 (GHTN…CIHD), 444–492 (AHNK…CTHT), 495–534 (KHQE…LVHS), and 536–568 (RGTG…LDLR). Residue K332 forms a Glycyl lysine isopeptide (Lys-Gly) (interchain with G-Cter in SUMO2) linkage.

The protein belongs to the WD repeat EBI family. In terms of assembly, homotetramer; dimer of dimers. Component of the N-Cor repressor complex, at least composed of NCOR1, NCOR2, HDAC3, TBL1X, TBL1R, CORO2A and GPS2. Interacts with GPS2 (when sumoylated); leading to protect GPS2 against degradation by the proteasome. Component of a E3 ubiquitin ligase complex containing UBE2D1, SIAH1, CACYBP/SIP, SKP1, APC and TBL1X. Probably part of other corepressor complexes, that do not contain NCOR1 and NCOR2. Interacts with histones H2B, H3a and H4. Interacts with MECP2; recruits TBL1X to the heterochromatin foci. Interacts with USP44.

The protein localises to the nucleus. Its function is as follows. F-box-like protein involved in the recruitment of the ubiquitin/19S proteasome complex to nuclear receptor-regulated transcription units. Plays an essential role in transcription activation mediated by nuclear receptors. Probably acts as integral component of corepressor complexes that mediates the recruitment of the 19S proteasome complex, leading to the subsequent proteasomal degradation of transcription repressor complexes, thereby allowing cofactor exchange. This chain is F-box-like/WD repeat-containing protein TBL1X (TBL1X), found in Macaca fascicularis (Crab-eating macaque).